Here is a 255-residue protein sequence, read N- to C-terminus: Indole-3-glycerol phosphate synthase (255 aa).

Belongs to the TrpC family.

The enzyme catalyses 1-(2-carboxyphenylamino)-1-deoxy-D-ribulose 5-phosphate + H(+) = (1S,2R)-1-C-(indol-3-yl)glycerol 3-phosphate + CO2 + H2O. It participates in amino-acid biosynthesis; L-tryptophan biosynthesis; L-tryptophan from chorismate: step 4/5. The sequence is that of Indole-3-glycerol phosphate synthase from Shouchella clausii (strain KSM-K16) (Alkalihalobacillus clausii).